The chain runs to 946 residues: Inositol-trisphosphate 3-kinase B (946 aa).

Disordered stretches follow at residues 19-128 (EMKS…EEAK), 156-288 (AQSS…TRSC), 308-472 (ARVT…GIPS), 486-561 (KDLK…RKAC), and 580-638 (GALE…HTLD). A phosphoserine mark is found at S43, S49, and S71. Residues 83–105 (NSSSGSGSGSSGSSVSSPSWAGR) show a composition bias toward low complexity. A phosphoserine mark is found at S204 and S269. The span at 396–411 (TTVSVQSAESSDSLSW) shows a compositional bias: polar residues. Residues 445 to 458 (GGSPTLGLLGGSPS) show a composition bias toward low complexity. Residues 524-534 (TGVQSEGTWES) show a composition bias toward polar residues. The span at 599–612 (SSSSASSTGFSSSY) shows a compositional bias: low complexity. ATP is bound by residues S679, K690, 730–732 (DDL), and D743. The substrate site is built by K745 and R766. The tract at residues 768 to 776 (DMYQKMIEV) is calmodulin-binding. 793–800 (KPRYMQWR) is a binding site for substrate. The ATP site is built by K817 and D897. K900 is a substrate binding site.

This sequence belongs to the inositol phosphokinase (IPK) family. As to quaternary structure, interacts with DMTN.

The protein localises to the cytoplasm. It localises to the cytoskeleton. Its subcellular location is the endoplasmic reticulum. The enzyme catalyses 1D-myo-inositol 1,4,5-trisphosphate + ATP = 1D-myo-inositol 1,3,4,5-tetrakisphosphate + ADP + H(+). IP3K is activated by calcium and calmodulin. Form B is much more sensitive to calcium/calmodulin than form A. Functionally, catalyzes the phosphorylation of 1D-myo-inositol 1,4,5-trisphosphate (InsP3) into 1D-myo-inositol 1,3,4,5-tetrakisphosphate and participates to the regulation of calcium homeostasis. The polypeptide is Inositol-trisphosphate 3-kinase B (Homo sapiens (Human)).